The primary structure comprises 266 residues: Phage-like element PBSX protein XkdC (266 aa).

Gly124–Thr131 provides a ligand contact to ATP.

This sequence to B.subtilis YqaM.

In terms of biological role, may function as a transcriptional antiterminator. In Bacillus subtilis (strain 168), this protein is Phage-like element PBSX protein XkdC (xkdC).